The primary structure comprises 324 residues: Lipid droplet-associated hydrolase (324 aa).

S136 (nucleophile) is an active-site residue. Active-site charge relay system residues include D270 and H299.

Belongs to the AB hydrolase superfamily. LDAH family.

The protein resides in the lipid droplet. The protein localises to the endoplasmic reticulum. The catalysed reaction is a cholesterol ester + H2O = cholesterol + a fatty acid + H(+). Probable serine lipid hydrolase associated with lipid droplets. Has low cholesterol esterase activity. Appears to lack triglyceride lipase activity. Involved in cholesterol and triglyceride homeostasis; stimulates cellular triglyceride accumulation and cellular cholesterol release. This Gallus gallus (Chicken) protein is Lipid droplet-associated hydrolase.